Reading from the N-terminus, the 80-residue chain is Exodeoxyribonuclease 7 small subunit (80 aa).

Belongs to the XseB family. As to quaternary structure, heterooligomer composed of large and small subunits.

It is found in the cytoplasm. It catalyses the reaction Exonucleolytic cleavage in either 5'- to 3'- or 3'- to 5'-direction to yield nucleoside 5'-phosphates.. Bidirectionally degrades single-stranded DNA into large acid-insoluble oligonucleotides, which are then degraded further into small acid-soluble oligonucleotides. This is Exodeoxyribonuclease 7 small subunit from Pseudomonas putida (strain W619).